The primary structure comprises 393 residues: Acetate kinase (393 aa).

Residue Asn7 participates in Mg(2+) binding. Lys14 is a binding site for ATP. Position 89 (Arg89) interacts with substrate. The active-site Proton donor/acceptor is Asp146. ATP-binding positions include 204 to 208 (HIGNG), 279 to 281 (DSR), and 327 to 331 (GIGEN). Glu379 provides a ligand contact to Mg(2+).

Belongs to the acetokinase family. Homodimer. Requires Mg(2+) as cofactor. Mn(2+) is required as a cofactor.

It is found in the cytoplasm. The catalysed reaction is acetate + ATP = acetyl phosphate + ADP. It functions in the pathway metabolic intermediate biosynthesis; acetyl-CoA biosynthesis; acetyl-CoA from acetate: step 1/2. Functionally, catalyzes the formation of acetyl phosphate from acetate and ATP. Can also catalyze the reverse reaction. This is Acetate kinase from Acholeplasma laidlawii (strain PG-8A).